Consider the following 308-residue polypeptide: NAD-dependent protein deacylase SIR4 (308 aa).

The N-terminal 16 residues, 1–16 (MAATKLHPALRNAIRA), are a transit peptide targeting the mitochondrion. Positions 28–308 (TFDVQEGIKL…EVLPAALRQL (281 aa)) constitute a Deacetylase sirtuin-type domain. Residues 53–73 (GAGI…RPPH) and 129–132 (QNVD) each bind NAD(+). Residue H147 is the Proton acceptor of the active site. Zn(2+) contacts are provided by C155, C158, C211, and C214. NAD(+) is bound by residues 251–253 (GTS), 277–279 (NSG), and I297.

This sequence belongs to the sirtuin family. Class II subfamily. The cofactor is Zn(2+).

Its subcellular location is the mitochondrion matrix. It carries out the reaction N(6)-acetyl-L-lysyl-[protein] + NAD(+) + H2O = 2''-O-acetyl-ADP-D-ribose + nicotinamide + L-lysyl-[protein]. NAD-dependent protein deacylase. Catalyzes the NAD-dependent hydrolysis of acyl groups from lysine residues. The chain is NAD-dependent protein deacylase SIR4 from Monosiga brevicollis (Choanoflagellate).